The chain runs to 124 residues: Small ribosomal subunit protein uS13 (124 aa).

The tract at residues 89–124 (GRRHRQGLPVRGQRTKTNARTRKGPKRTVAGKKKAK) is disordered. Basic residues predominate over residues 101 to 124 (QRTKTNARTRKGPKRTVAGKKKAK).

Belongs to the universal ribosomal protein uS13 family. As to quaternary structure, part of the 30S ribosomal subunit. Forms a loose heterodimer with protein S19. Forms two bridges to the 50S subunit in the 70S ribosome.

Its function is as follows. Located at the top of the head of the 30S subunit, it contacts several helices of the 16S rRNA. In the 70S ribosome it contacts the 23S rRNA (bridge B1a) and protein L5 of the 50S subunit (bridge B1b), connecting the 2 subunits; these bridges are implicated in subunit movement. Contacts the tRNAs in the A and P-sites. The polypeptide is Small ribosomal subunit protein uS13 (Nocardioides sp. (strain ATCC BAA-499 / JS614)).